The sequence spans 258 residues: 4-hydroxy-tetrahydrodipicolinate reductase (258 aa).

NAD(+)-binding positions include 8 to 13, 93 to 95, and 117 to 120; these read GVTGRM, GTT, and AANF. Catalysis depends on histidine 149, which acts as the Proton donor/acceptor. A (S)-2,3,4,5-tetrahydrodipicolinate-binding site is contributed by histidine 150. Lysine 153 (proton donor) is an active-site residue. 159–160 lines the (S)-2,3,4,5-tetrahydrodipicolinate pocket; that stretch reads GT.

It belongs to the DapB family.

Its subcellular location is the cytoplasm. The enzyme catalyses (S)-2,3,4,5-tetrahydrodipicolinate + NAD(+) + H2O = (2S,4S)-4-hydroxy-2,3,4,5-tetrahydrodipicolinate + NADH + H(+). The catalysed reaction is (S)-2,3,4,5-tetrahydrodipicolinate + NADP(+) + H2O = (2S,4S)-4-hydroxy-2,3,4,5-tetrahydrodipicolinate + NADPH + H(+). Its pathway is amino-acid biosynthesis; L-lysine biosynthesis via DAP pathway; (S)-tetrahydrodipicolinate from L-aspartate: step 4/4. Catalyzes the conversion of 4-hydroxy-tetrahydrodipicolinate (HTPA) to tetrahydrodipicolinate. The polypeptide is 4-hydroxy-tetrahydrodipicolinate reductase (Thermomicrobium roseum (strain ATCC 27502 / DSM 5159 / P-2)).